A 427-amino-acid chain; its full sequence is Enolase (427 aa).

Residue Gln-163 participates in (2R)-2-phosphoglycerate binding. The Proton donor role is filled by Glu-205. 3 residues coordinate Mg(2+): Asp-242, Glu-285, and Asp-312. Residues Lys-337, Arg-366, Ser-367, and Lys-388 each contribute to the (2R)-2-phosphoglycerate site. Lys-337 serves as the catalytic Proton acceptor.

It belongs to the enolase family. The cofactor is Mg(2+).

The protein localises to the cytoplasm. It is found in the secreted. It localises to the cell surface. The enzyme catalyses (2R)-2-phosphoglycerate = phosphoenolpyruvate + H2O. Its pathway is carbohydrate degradation; glycolysis; pyruvate from D-glyceraldehyde 3-phosphate: step 4/5. Catalyzes the reversible conversion of 2-phosphoglycerate (2-PG) into phosphoenolpyruvate (PEP). It is essential for the degradation of carbohydrates via glycolysis. This chain is Enolase, found in Ralstonia pickettii (strain 12J).